The following is a 522-amino-acid chain: Glutamate--cysteine ligase (522 aa).

This sequence belongs to the glutamate--cysteine ligase type 1 family. Type 1 subfamily.

The catalysed reaction is L-cysteine + L-glutamate + ATP = gamma-L-glutamyl-L-cysteine + ADP + phosphate + H(+). Its pathway is sulfur metabolism; glutathione biosynthesis; glutathione from L-cysteine and L-glutamate: step 1/2. In Vibrio parahaemolyticus serotype O3:K6 (strain RIMD 2210633), this protein is Glutamate--cysteine ligase.